The primary structure comprises 530 residues: Inactive ubiquitin carboxyl-terminal hydrolase 17-like protein 8 (530 aa).

Residues 80 to 375 (AGLQNMGNTC…QAYVLFYIQK (296 aa)) enclose the USP domain. Residues 382 to 392 (SESVSRGREPR) show a composition bias toward basic and acidic residues. Disordered regions lie at residues 382-412 (SESV…KRDH) and 493-530 (NSTD…LVCQ). Residues 495–510 (TDQESMNTGTLASLQG) show a composition bias toward polar residues. Residues 511–524 (RTRRSKGKNKHSKR) show a composition bias toward basic residues.

It belongs to the peptidase C19 family. USP17 subfamily.

The protein localises to the nucleus. Its subcellular location is the endoplasmic reticulum. The sequence is that of Inactive ubiquitin carboxyl-terminal hydrolase 17-like protein 8 (USP17L8) from Homo sapiens (Human).